Reading from the N-terminus, the 451-residue chain is POC1 centriolar protein homolog B (451 aa).

7 WD repeats span residues 16-55 (GHKAAITSLDLSPNGKQLATASWDTFLMLWNFKPHARAYR), 58-99 (GHKD…SEFK), 101-139 (HTAPVRSVDFSADGQFLATASEDKSIKVWSMYRQRFLYS), 142-181 (RHTHWVRCAKFSPDGRLIVSCSEDKTIKIWDTTNKQCVNN), 183-223 (SDSV…LLQH), 226-265 (VHSGGVNCISFHPSDNYLVTASSDGTLKILDLLEGRLIYT), and 268-307 (GHTGPVFTVSFSKGGELFASGGADTQVLLWRTNFDELHCK). Position 321 is a phosphoserine (S321). A disordered region spans residues 372 to 394 (PECSPTTTKKKTEDMSDLPSESQ). Residues 404–443 (ALEHIMEQLNVLTQTVSILEQRLTLTEDKLKDCLENQQKL) are a coiled coil.

It belongs to the WD repeat POC1 family. In terms of assembly, interacts with POC1A. Interacts with FAM161A. Interacts with CEP44; the interaction is direct and recruits POC1B to centriolar microtubules. Forms a microtubule-associated complex with POC5, CETN2 and FAM161A. Interacts with CCDC15. Phosphorylated in mitotic cells that may be mediated by CDK1.

It localises to the cytoplasm. The protein localises to the cytoskeleton. It is found in the microtubule organizing center. Its subcellular location is the centrosome. The protein resides in the centriole. It localises to the cilium basal body. The protein localises to the spindle pole. Its function is as follows. Plays an important role in centriole assembly and/or stability and ciliogenesis. Involved in early steps of centriole duplication, as well as in the later steps of centriole length control. Acts in concert with POC1A to ensure centriole integrity and proper mitotic spindle formation. Required for primary cilia formation, ciliary length and also cell proliferation. Required for retinal integrity. Acts as a positive regulator of centriole elongation. The polypeptide is POC1 centriolar protein homolog B (POC1B) (Pongo abelii (Sumatran orangutan)).